The following is a 212-amino-acid chain: Uridine kinase (212 aa).

13–20 contributes to the ATP binding site; it reads GASASGKS.

It belongs to the uridine kinase family.

Its subcellular location is the cytoplasm. The enzyme catalyses uridine + ATP = UMP + ADP + H(+). It carries out the reaction cytidine + ATP = CMP + ADP + H(+). Its pathway is pyrimidine metabolism; CTP biosynthesis via salvage pathway; CTP from cytidine: step 1/3. The protein operates within pyrimidine metabolism; UMP biosynthesis via salvage pathway; UMP from uridine: step 1/1. This Shewanella oneidensis (strain ATCC 700550 / JCM 31522 / CIP 106686 / LMG 19005 / NCIMB 14063 / MR-1) protein is Uridine kinase.